The chain runs to 265 residues: Serine protease 1 (265 aa).

An N-terminal signal peptide occupies residues 1–21 (MKLFVFLALAVAAATAVPAPA). A propeptide spanning residues 22–35 (QKLTPTPIKDIQGR) is cleaved from the precursor. Residues 36-262 (ITNGYPAYEG…YLDWIRDNTG (227 aa)) form the Peptidase S1 domain. C63 and C79 are oxidised to a cystine. Catalysis depends on charge relay system residues H78 and D123. 2 disulfides stabilise this stretch: C189/C201 and C211/C239. S215 acts as the Charge relay system in catalysis.

It belongs to the peptidase S1 family. Abundantly expressed in the larval gut.

Functionally, major function may be to aid in digestion. In Drosophila melanogaster (Fruit fly), this protein is Serine protease 1.